The chain runs to 337 residues: DNA-directed RNA polymerase subunit alpha (337 aa).

The interval 1-233 is alpha N-terminal domain (alpha-NTD); sequence MIQKNWQELI…DQLSIFVNFE (233 aa). The alpha C-terminal domain (alpha-CTD) stretch occupies residues 249 to 337; it reads FNPALLKKVD…DLAKRYEDQY (89 aa).

Belongs to the RNA polymerase alpha chain family. As to quaternary structure, homodimer. The RNAP catalytic core consists of 2 alpha, 1 beta, 1 beta' and 1 omega subunit. When a sigma factor is associated with the core the holoenzyme is formed, which can initiate transcription.

It carries out the reaction RNA(n) + a ribonucleoside 5'-triphosphate = RNA(n+1) + diphosphate. DNA-dependent RNA polymerase catalyzes the transcription of DNA into RNA using the four ribonucleoside triphosphates as substrates. This Brucella abortus (strain S19) protein is DNA-directed RNA polymerase subunit alpha.